A 136-amino-acid chain; its full sequence is Secreted RxLR effector protein 63 (136 aa).

Residues 1-21 (MQRFPYSLLLLLLSATNRSRR) form the signal peptide. Positions 43–46 (RMLR) match the RxLR motif.

It belongs to the RxLR effector family.

It localises to the secreted. The protein resides in the host nucleus. Its function is as follows. Effector that partially suppresses the tobacco programmed cell death induced by cell death-inducing proteins. This is Secreted RxLR effector protein 63 from Plasmopara viticola (Downy mildew of grapevine).